Here is a 406-residue protein sequence, read N- to C-terminus: Peptidyl-alpha-hydroxyglycine alpha-amidating lyase 2 (406 aa).

The signal sequence occupies residues 1–19 (MSRLLFVALLAISLGYVAS). 4 NHL repeats span residues 168 to 209 (GAIK…FKPF), 218 to 261 (GKRF…FNAA), 264 to 308 (LLRT…PKAG), and 358 to 402 (DPRS…RVWK). Intrachain disulfides connect Cys-231/Cys-251 and Cys-293/Cys-304.

The protein belongs to the peptidyl-alpha-hydroxyglycine alpha-amidating lyase family. Zn(2+) serves as cofactor. In terms of processing, N-glycosylated. As to expression, only found in a subset of neurons distributed throughout all levels of the central nervous system (CNS). Present in at least some neuroendocrine cells. In adult brains, it is only present in a small handful of cells, the majority of which being distributed in distal parts of the medulla, with a higher expression in the posterior surface of the brain (at protein level).

Its subcellular location is the secreted. The catalysed reaction is a [peptide]-C-terminal (2S)-2-hydroxyglycine = a [peptide]-C-terminal amide + glyoxylate. Its function is as follows. Peptidyl-alpha-hydroxylglycine alpha-amidating lyase that catalyzes an essential reaction in C-terminal alpha-amidation of peptides. Mediates the dismutation of the unstable peptidyl(2-hydroxyglycine) intermediate to glyoxylate and the corresponding desglycine peptide amide. C-terminal amidation of peptides such as neuropeptides is essential for full biological activity. This Drosophila melanogaster (Fruit fly) protein is Peptidyl-alpha-hydroxyglycine alpha-amidating lyase 2 (Pal2).